The primary structure comprises 164 residues: Protein SprT (164 aa).

In terms of domain architecture, SprT-like spans 14–156 (QLAESFFKRP…LCRRCRNTLV (143 aa)). H69 contributes to the Zn(2+) binding site. Residue E70 is part of the active site. H73 is a Zn(2+) binding site.

Belongs to the SprT family. The cofactor is Zn(2+).

The protein resides in the cytoplasm. This is Protein SprT from Pseudomonas fluorescens (strain Pf0-1).